The sequence spans 35 residues: Photosystem II reaction center protein T (35 aa).

The chain crosses the membrane as a helical span at residues 3–23 (ALVYTFLLVSTLGIIFFAIFF).

This sequence belongs to the PsbT family. In terms of assembly, PSII is composed of 1 copy each of membrane proteins PsbA, PsbB, PsbC, PsbD, PsbE, PsbF, PsbH, PsbI, PsbJ, PsbK, PsbL, PsbM, PsbT, PsbY, PsbZ, Psb30/Ycf12, at least 3 peripheral proteins of the oxygen-evolving complex and a large number of cofactors. It forms dimeric complexes.

The protein resides in the plastid. It localises to the chloroplast thylakoid membrane. Functionally, found at the monomer-monomer interface of the photosystem II (PS II) dimer, plays a role in assembly and dimerization of PSII. PSII is a light-driven water plastoquinone oxidoreductase, using light energy to abstract electrons from H(2)O, generating a proton gradient subsequently used for ATP formation. This Stewartia pseudocamellia (Japanese stewartia) protein is Photosystem II reaction center protein T.